The chain runs to 430 residues: Leucoanthocyanidin dioxygenase (430 aa).

A Fe2OG dioxygenase domain is found at 212-311 (LLLQMKINYY…RFSWAIFCEP (100 aa)). 3 residues coordinate Fe cation: histidine 236, aspartate 238, and histidine 292. Basic and acidic residues-rich tracts occupy residues 376–407 (KKDN…KEDG) and 415–430 (KVFK…EESK). The interval 376–430 (KKDNQDAVAENKDIKEDEQCGPAEHKDIKEDGQGAAAENKVFKENNQDVAAEESK) is disordered.

This sequence belongs to the iron/ascorbate-dependent oxidoreductase family. Requires Fe cation as cofactor. It depends on L-ascorbate as a cofactor. Predominantly expressed in corollas and at lower levels in anthers.

It catalyses the reaction a (2R,3S,4S)-leucoanthocyanidin + 2-oxoglutarate + O2 = a 4-H-anthocyanidin with a 3-hydroxy group + succinate + CO2 + 2 H2O. It functions in the pathway pigment biosynthesis; anthocyanin biosynthesis. In terms of biological role, oxidation of leucoanthocyanidins into anthocyanidins. In Petunia hybrida (Petunia), this protein is Leucoanthocyanidin dioxygenase (ANT17).